The chain runs to 1285 residues: Peroxisomal ATPase PEX1 (1285 aa).

Polar residues predominate over residues 344 to 353 (QQGKTKQSVM). Positions 344-373 (QQGKTKQSVMSPEKEKHPLESPNHKQIGSD) are disordered. Position 354 is a phosphoserine (Ser354). Positions 355–373 (PEKEKHPLESPNHKQIGSD) are enriched in basic and acidic residues. ATP-binding positions include 601–608 (GGKGSGKS) and 883–890 (GPPGTGKT). A compositionally biased stretch (polar residues) spans 1142 to 1161 (NGTSSDLSSQCPSAPSSVTQ). A disordered region spans residues 1142–1162 (NGTSSDLSSQCPSAPSSVTQD). Residues Ser1183, Ser1211, and Ser1213 each carry the phosphoserine modification. The disordered stretch occupies residues 1262 to 1285 (FQNPKKRKNPSGTVFRPGQKVTLA).

Belongs to the AAA ATPase family. As to quaternary structure, homooligomer; homooligomerizes in the cytosol, interaction with PEX6 promotes dissociation of the homooligomer. Interacts with PEX6; forming the PEX1-PEX6 AAA ATPase complex, which is composed of a heterohexamer formed by a trimer of PEX1-PEX6 dimers. Interacts indirectly with PEX26, via its interaction with PEX6.

It localises to the cytoplasm. The protein resides in the cytosol. The protein localises to the peroxisome membrane. It catalyses the reaction ATP + H2O = ADP + phosphate + H(+). Component of the PEX1-PEX6 AAA ATPase complex, a protein dislocase complex that mediates the ATP-dependent extraction of the PEX5 receptor from peroxisomal membranes, an essential step for PEX5 recycling. Specifically recognizes PEX5 monoubiquitinated at 'Cys-11', and pulls it out of the peroxisome lumen through the PEX2-PEX10-PEX12 retrotranslocation channel. Extraction by the PEX1-PEX6 AAA ATPase complex is accompanied by unfolding of the TPR repeats and release of bound cargo from PEX5. The protein is Peroxisomal ATPase PEX1 of Cricetulus griseus (Chinese hamster).